The sequence spans 190 residues: Selenoprotein S (190 aa).

A helical membrane pass occupies residues 28 to 48 (SLLASYGWYILFSCVLLYIVI). Residues 78-90 (RQEALAAARLRMQ) form a VCP/p97-interacting motif (VIM) region. Residues 96–190 (QVEKHKEKQR…RRGPSSGGUS (95 aa)) form a disordered region. Residues 97-118 (VEKHKEKQRQLEEEKRRQKIEM) show a composition bias toward basic and acidic residues. The segment covering 160-174 (RGGGYNPLTGEGGGT) has biased composition (gly residues). A non-standard amino acid (selenocysteine) is located at residue selenocysteine 189.

It belongs to the selenoprotein S family. In terms of assembly, interacts with DERL1 and (via VIM motif) with VCP, suggesting that it forms a membrane complex with DERL1 that serves as a receptor for VCP. Also interacts with DERL2, DERL3 and SELENOK. The SELENOK-SELENOS complex interacts with VCP. Interacts with CCDC47. In terms of processing, truncated SELENOS proteins produced by failed UGA/Sec decoding are ubiquitinated by the CRL2(KLHDC2) and CRL2(KLHDC3) complexes, which recognizes the glycine (Gly) at the C-terminus of truncated SELENOS proteins. Truncated SELENOS proteins produced by failed UGA/Sec decoding are also ubiquitinated by the CRL5(KLHDC1) complex.

It is found in the endoplasmic reticulum membrane. It localises to the cytoplasm. Functionally, involved in the degradation process of misfolded endoplasmic reticulum (ER) luminal proteins. Participates in the transfer of misfolded proteins from the ER to the cytosol, where they are destroyed by the proteasome in a ubiquitin-dependent manner. Probably acts by serving as a linker between DERL1, which mediates the retrotranslocation of misfolded proteins into the cytosol, and the ATPase complex VCP, which mediates the translocation and ubiquitination. The sequence is that of Selenoprotein S from Rattus norvegicus (Rat).